Reading from the N-terminus, the 213-residue chain is Ion-translocating oxidoreductase complex subunit E (213 aa).

6 consecutive transmembrane segments (helical) span residues 25 to 45, 46 to 66, 77 to 97, 100 to 120, 135 to 155, and 181 to 201; these read TFGL…VENG, IGMA…VSAI, PVEI…MEAF, DLYT…IVIG, IIDA…IGGI, and AMFM…MTIV.

This sequence belongs to the NqrDE/RnfAE family. In terms of assembly, the Rnf complex is probably composed of eight subunits, including RnfA, RnfB, RnfC, RnfD, RnfE and RnfG.

It localises to the cell membrane. Part of a membrane-bound complex that couples electron transfer with translocation of ions across the membrane. Catalyzes Na(+) transport, most probably coupled to electron transfer from reduced ferredoxin to methanophenazine and heterodisulfide reductase. Involved in heterodisulfide reduction during methanogenesis from acetate. This is Ion-translocating oxidoreductase complex subunit E from Methanosarcina acetivorans (strain ATCC 35395 / DSM 2834 / JCM 12185 / C2A).